A 256-amino-acid polypeptide reads, in one-letter code: MLRIADKTFDSHLFTGTGKFASSQLMVEAIRASGSQLVTLAMKRVDLRQHNDAILAPLIEAGVTLLPNTSGAKTAEEAIFAAQLAREALGTNWLKLEIHPDARWLLPDPIETLKAAEALVKQGFVVLPYCGADPVLCKRLEEVGCAAVMPLGAPIGSNQGLETKTMLEIIIQQATVPVVVDAGIGVPSHAAQALEMGADAVLVNTAIAVADDPVMMATAFRLAVEAGLLARQAVPGNRSTYASATSPLTGFLEALA.

K95 functions as the Schiff-base intermediate with DXP in the catalytic mechanism. 1-deoxy-D-xylulose 5-phosphate contacts are provided by residues G156, 182 to 183 (AG), and 204 to 205 (NT).

It belongs to the ThiG family. As to quaternary structure, homotetramer. Forms heterodimers with either ThiH or ThiS.

The protein resides in the cytoplasm. It catalyses the reaction [ThiS sulfur-carrier protein]-C-terminal-Gly-aminoethanethioate + 2-iminoacetate + 1-deoxy-D-xylulose 5-phosphate = [ThiS sulfur-carrier protein]-C-terminal Gly-Gly + 2-[(2R,5Z)-2-carboxy-4-methylthiazol-5(2H)-ylidene]ethyl phosphate + 2 H2O + H(+). Its pathway is cofactor biosynthesis; thiamine diphosphate biosynthesis. Its function is as follows. Catalyzes the rearrangement of 1-deoxy-D-xylulose 5-phosphate (DXP) to produce the thiazole phosphate moiety of thiamine. Sulfur is provided by the thiocarboxylate moiety of the carrier protein ThiS. In vitro, sulfur can be provided by H(2)S. The chain is Thiazole synthase from Salmonella enteritidis PT4 (strain P125109).